A 430-amino-acid polypeptide reads, in one-letter code: GTPase Obg (430 aa).

Residues 1–158 form the Obg domain; it reads MFVDQVTISL…LDVTLELKLL (158 aa). The tract at residues 118–145 is disordered; it reads RGGRGGRGNSRFATPRNPAPDFSENGEP. Residues 159–329 form the OBG-type G domain; the sequence is ADVGLVGFPS…LLYAIADKLD (171 aa). GTP-binding positions include 165–172, 190–194, 212–215, 282–285, and 310–312; these read GFPSVGKS, FTTIK, DLPG, NKMD, and STI. Mg(2+) contacts are provided by serine 172 and threonine 192. The region spanning 352–430 is the OCT domain; that stretch reads KHTPSQDKFT…ILGGEFEFVE (79 aa).

This sequence belongs to the TRAFAC class OBG-HflX-like GTPase superfamily. OBG GTPase family. In terms of assembly, monomer. It depends on Mg(2+) as a cofactor.

It is found in the cytoplasm. In terms of biological role, an essential GTPase which binds GTP, GDP and possibly (p)ppGpp with moderate affinity, with high nucleotide exchange rates and a fairly low GTP hydrolysis rate. Plays a role in control of the cell cycle, stress response, ribosome biogenesis and in those bacteria that undergo differentiation, in morphogenesis control. The protein is GTPase Obg of Staphylococcus haemolyticus (strain JCSC1435).